Reading from the N-terminus, the 129-residue chain is Sigma factor-binding protein Crl (129 aa).

An essential for activity region spans residues 99-119 (TQNCFHLKLVKTLEENFQLSV).

Belongs to the Crl family.

The protein localises to the cytoplasm. Functionally, binds to the sigma-S subunit of RNA polymerase, activating expression of sigma-S-regulated genes. Stimulates RNA polymerase holoenzyme formation and may bind to several other sigma factors, such as sigma-70 and sigma-32. This is Sigma factor-binding protein Crl from Vibrio vulnificus (strain CMCP6).